The primary structure comprises 464 residues: Fumarate hydratase class II (464 aa).

Substrate-binding positions include S98–T100, R126, H129–D132, S139–N141, and T187. H188 (proton donor/acceptor) is an active-site residue. The active site involves S318. Substrate contacts are provided by residues S319 and K324 to N326.

Belongs to the class-II fumarase/aspartase family. Fumarase subfamily. As to quaternary structure, homotetramer.

It is found in the cytoplasm. It carries out the reaction (S)-malate = fumarate + H2O. The protein operates within carbohydrate metabolism; tricarboxylic acid cycle; (S)-malate from fumarate: step 1/1. Involved in the TCA cycle. Catalyzes the stereospecific interconversion of fumarate to L-malate. This is Fumarate hydratase class II from Photorhabdus laumondii subsp. laumondii (strain DSM 15139 / CIP 105565 / TT01) (Photorhabdus luminescens subsp. laumondii).